Consider the following 208-residue polypeptide: Uracil phosphoribosyltransferase (208 aa).

5-phospho-alpha-D-ribose 1-diphosphate is bound by residues arginine 78, arginine 103, and 130–138; that span reads DPMLATGGT. Residues isoleucine 193 and 198-200 each bind uracil; that span reads GDA. Aspartate 199 is a 5-phospho-alpha-D-ribose 1-diphosphate binding site.

The protein belongs to the UPRTase family. It depends on Mg(2+) as a cofactor.

It carries out the reaction UMP + diphosphate = 5-phospho-alpha-D-ribose 1-diphosphate + uracil. The protein operates within pyrimidine metabolism; UMP biosynthesis via salvage pathway; UMP from uracil: step 1/1. Allosterically activated by GTP. Its function is as follows. Catalyzes the conversion of uracil and 5-phospho-alpha-D-ribose 1-diphosphate (PRPP) to UMP and diphosphate. The chain is Uracil phosphoribosyltransferase from Oleidesulfovibrio alaskensis (strain ATCC BAA-1058 / DSM 17464 / G20) (Desulfovibrio alaskensis).